Here is a 119-residue protein sequence, read N- to C-terminus: Protein RALF-like 22 (119 aa).

An N-terminal signal peptide occupies residues 1-23 (MTNTRAIYAVIAILAIVISAVES). Positions 24–70 (TGDFGDSLDFVRAGSSSLFSGCTGSIAECIAEEEEMEFDSDISRRIL) are cleaved as a propeptide — removed in mature form. Intrachain disulfides connect cysteine 88–cysteine 98 and cysteine 111–cysteine 117.

It belongs to the plant rapid alkalinization factor (RALF) family. Post-translationally, proteolytically cleaved, probably by S1P, a subtilisin-like serine protease (subtilase).

Its subcellular location is the secreted. In terms of biological role, cell signaling peptide that may regulate plant stress, growth, and development. Mediates a rapid alkalinization of extracellular space by mediating a transient increase in the cytoplasmic Ca(2+) concentration leading to a calcium-dependent signaling events through a cell surface receptor and a concomitant activation of some intracellular mitogen-activated protein kinases. The sequence is that of Protein RALF-like 22 (RALFL22) from Arabidopsis thaliana (Mouse-ear cress).